The chain runs to 445 residues: Phosphoglucosamine mutase (445 aa).

The active-site Phosphoserine intermediate is the Ser-102. Mg(2+) is bound by residues Ser-102, Asp-241, Asp-243, and Asp-245. Position 102 is a phosphoserine (Ser-102).

This sequence belongs to the phosphohexose mutase family. Mg(2+) is required as a cofactor. Post-translationally, activated by phosphorylation.

It catalyses the reaction alpha-D-glucosamine 1-phosphate = D-glucosamine 6-phosphate. Functionally, catalyzes the conversion of glucosamine-6-phosphate to glucosamine-1-phosphate. This Rhodococcus erythropolis (strain PR4 / NBRC 100887) protein is Phosphoglucosamine mutase.